The following is a 159-amino-acid chain: Ribosome maturation factor RimP (159 aa).

Belongs to the RimP family.

It is found in the cytoplasm. Required for maturation of 30S ribosomal subunits. The chain is Ribosome maturation factor RimP from Halothermothrix orenii (strain H 168 / OCM 544 / DSM 9562).